A 304-amino-acid polypeptide reads, in one-letter code: Cell surface-binding protein OPG105 (304 aa).

The Alpha-carbonic anhydrase domain maps to 1 to 235; sequence MPQQLSPINI…NDDTQVYYSG (235 aa). Residues 1 to 275 are Virion surface-facing; it reads MPQQLSPINI…YQKYIEGNKT (275 aa). A helical membrane pass occupies residues 276–294; it reads FAIIAIVFVFILTAILFLM. The Intravirion segment spans residues 295 to 304; the sequence is SRRYSREKQN.

The protein belongs to the alpha-carbonic anhydrase family. As to quaternary structure, homodimer; disulfide-linked. Post-translationally, apparently non-glycosylated.

It localises to the virion membrane. Functionally, binds to chondroitin sulfate on the cell surface to provide virion attachment to target cell. This is Cell surface-binding protein OPG105 (OPG105) from Rabbitpox virus (strain Utrecht) (RPV).